The primary structure comprises 449 residues: L-seryl-tRNA(Sec) selenium transferase (449 aa).

N6-(pyridoxal phosphate)lysine is present on K286.

This sequence belongs to the SelA family. Pyridoxal 5'-phosphate is required as a cofactor.

The protein localises to the cytoplasm. The enzyme catalyses L-seryl-tRNA(Sec) + selenophosphate + H(+) = L-selenocysteinyl-tRNA(Sec) + phosphate. The protein operates within aminoacyl-tRNA biosynthesis; selenocysteinyl-tRNA(Sec) biosynthesis; selenocysteinyl-tRNA(Sec) from L-seryl-tRNA(Sec) (bacterial route): step 1/1. Its function is as follows. Converts seryl-tRNA(Sec) to selenocysteinyl-tRNA(Sec) required for selenoprotein biosynthesis. In Sulfurimonas denitrificans (strain ATCC 33889 / DSM 1251) (Thiomicrospira denitrificans (strain ATCC 33889 / DSM 1251)), this protein is L-seryl-tRNA(Sec) selenium transferase.